The sequence spans 244 residues: Cobalt transport protein CbiM (244 aa).

The first 28 residues, 1-28, serve as a signal peptide directing secretion; that stretch reads MKLLKNKKVTFVALLAILAVLSTQSVSA. The next 6 membrane-spanning stretches (helical) occupy residues 36-56, 71-91, 108-128, 135-155, 166-186, and 208-228; these read LPLFWCIFWFAVFLPFFVVGL, TMLALSGAFIFILSSLKIPSV, FGPSVISVLGTICLLFQALLL, TLGANAFSMAVVGPFVGYFVY, PVSIFICAVIADLATYATTSI, and GVFLTTQIPIAIVEGLLTVVL.

It belongs to the CbiM family. In terms of assembly, forms an energy-coupling factor (ECF) transporter complex composed of an ATP-binding protein (A component, CbiO), a transmembrane protein (T component, CbiQ) and 2 possible substrate-capture proteins (S components, CbiM and CbiN) of unknown stoichimetry.

It is found in the cell membrane. It participates in cofactor biosynthesis; adenosylcobalamin biosynthesis. Functionally, part of the energy-coupling factor (ECF) transporter complex CbiMNOQ involved in cobalt import. The polypeptide is Cobalt transport protein CbiM (Streptococcus sanguinis (strain SK36)).